A 256-amino-acid polypeptide reads, in one-letter code: DNA repair protein RecO (256 aa).

The protein belongs to the RecO family.

Functionally, involved in DNA repair and RecF pathway recombination. The sequence is that of DNA repair protein RecO from Clostridium novyi (strain NT).